The sequence spans 687 residues: Protein FAR1-RELATED SEQUENCE 1 (687 aa).

The region spanning Glu-35–Thr-137 is the FAR1 domain. In terms of domain architecture, MULE spans Lys-211–Pro-254. The segment at Phe-440–Gly-476 adopts an SWIM-type zinc-finger fold. Residues Asn-540–Ser-562 are a coiled coil.

Belongs to the FHY3/FAR1 family. Expressed in rosette and cauline leaves, inflorescences stems, flowers and siliques.

The protein localises to the nucleus. Its function is as follows. Putative transcription activator involved in regulating light control of development. This is Protein FAR1-RELATED SEQUENCE 1 (FRS1) from Arabidopsis thaliana (Mouse-ear cress).